The following is a 670-amino-acid chain: MKESIQVTLEQLRETLHYHAVRYYVEDSPEIPDVEYDRLMQQLLKIEDENPELVTVDSPSQRVGGQPLDGFTQVTHEIPMLSLDNAFSDDDLDAFNKRMSDRAPTANLETFCCEPKLDGLAVSLLYVNGTLVQAATRGDGATGENITENVRTISSIPLKLQGEGWPERIEVRGEVFMPKAGFDKLNEMALKKGEKVFVNPRNAAAGSLRQLDSRITAKRPLAFYAYSVGVVQGAELSNSHYQRFLQLKAWGLPMCPETKQLSSLEDVKAYYQDIMTRRDTLAYEIDGVVIKVDDIAAQETLGFVARAPRWAIAYKFPAQEEITLLNDVEFQVGRTGAITPVAKLEPIFVGGVTVSNATLHNADEIARLGVKVGDSVIIRRAGDVIPQIVAVVQDRRPETAKDIVFPDACPVCNSAVERVEGEAVARCTGGLVCQAQRKEALKHFVSRKALDVDGLGVKVIEQLVDREMVETPADLFKLSAGVITVLDRMGPKSAQNVVSALNKAKDTTLARFLYSLGIREVGEATAMNLAQHFKTLELVQAATHEQLVEVSDIGDIVASHLTSFFSQEKNRAVVDQLIELGVNWPAIEAVADDQELPLEGKVVVLTGSLSKLGRSEAKAALQALGAKVTGSVSKKTDILFAGEAAGSKLTKAQDLGIEIRTEEDLIALIS.

NAD(+) is bound by residues 33 to 37 (DVEYD), 82 to 83 (SL), and Glu114. Lys116 serves as the catalytic N6-AMP-lysine intermediate. Residues Arg137, Glu174, Lys291, and Lys315 each contribute to the NAD(+) site. 4 residues coordinate Zn(2+): Cys409, Cys412, Cys427, and Cys433. The region spanning 593–670 (DQELPLEGKV…TEEDLIALIS (78 aa)) is the BRCT domain.

This sequence belongs to the NAD-dependent DNA ligase family. LigA subfamily. The cofactor is Mg(2+). Mn(2+) serves as cofactor.

The catalysed reaction is NAD(+) + (deoxyribonucleotide)n-3'-hydroxyl + 5'-phospho-(deoxyribonucleotide)m = (deoxyribonucleotide)n+m + AMP + beta-nicotinamide D-nucleotide.. Functionally, DNA ligase that catalyzes the formation of phosphodiester linkages between 5'-phosphoryl and 3'-hydroxyl groups in double-stranded DNA using NAD as a coenzyme and as the energy source for the reaction. It is essential for DNA replication and repair of damaged DNA. This chain is DNA ligase, found in Vibrio atlanticus (strain LGP32) (Vibrio splendidus (strain Mel32)).